Consider the following 278-residue polypeptide: ABC transporter I family member 11, chloroplastic (278 aa).

The transit peptide at 1-49 directs the protein to the chloroplast; sequence MAVSTFSSPTPVFGIAEPPASFSSTAIGWKQPLRFRRTKKPRVISCDYS. Residues 51-278 enclose the ABC transporter domain; sequence IEVRDVCYRP…GVLVAERPPL (228 aa). An ATP-binding site is contributed by 85 to 92; that stretch reads GKSGSGKT.

Belongs to the ABC transporter superfamily. ABCI family.

The protein localises to the plastid. It is found in the chloroplast. This is ABC transporter I family member 11, chloroplastic (ABCI11) from Arabidopsis thaliana (Mouse-ear cress).